Reading from the N-terminus, the 320-residue chain is MKFLFYLSADNLEIARKEVLVLAERYGWVEDYQFEERLLLLDYAGEKFFERLAYTNEVTKIYDICSVSELEQVFSEIPVYDRLCCVRVKGGKGKTALERKLGALLWKRGAKVSVSNPEIVYKVYIQDDKCYVGLLEFERDTRQFFLRRPDRRPFLMPSAIKPKLARALVNLTGVLEGETLLDPMCGTGSFLIEAGLMGINPIGIDFIEKIVRGCRVNLEYYGIEGSVLLGDAKNLPLRDESVRGIATDYPYLRSTKAAGTLDELYSKTSEEFERVLKKGGRAAIVTNIDVESFFSNFEIEMKTEERVHGSLTRRIYLLRR.

A THUMP domain is found at 46-136; sequence EKFFERLAYT…DDKCYVGLLE (91 aa).

This sequence belongs to the methyltransferase superfamily. Trm-G10 family. In terms of assembly, monomer.

The protein localises to the cytoplasm. It carries out the reaction guanosine(10) in tRNA + 2 S-adenosyl-L-methionine = N(2)-dimethylguanosine(10) in tRNA + 2 S-adenosyl-L-homocysteine + 2 H(+). Its function is as follows. Catalyzes the adenosylmethionine-dependent methylation of the exocyclic amino group (N(2)) of guanosine at position 10 of various tRNAs. Acts via a two-step process that leads to the formation of either N(2)-monomethyl (m(2)G) or N(2)-dimethylguanosine (m(2)(2)G). The polypeptide is tRNA (guanine(10)-N2)-dimethyltransferase (trmG10) (Archaeoglobus fulgidus (strain ATCC 49558 / DSM 4304 / JCM 9628 / NBRC 100126 / VC-16)).